We begin with the raw amino-acid sequence, 1386 residues long: DNA-directed RNA polymerase subunit beta (1386 aa).

The protein belongs to the RNA polymerase beta chain family. In terms of assembly, in plastids the minimal PEP RNA polymerase catalytic core is composed of four subunits: alpha, beta, beta', and beta''. When a (nuclear-encoded) sigma factor is associated with the core the holoenzyme is formed, which can initiate transcription.

It localises to the plastid. Its subcellular location is the chloroplast. The enzyme catalyses RNA(n) + a ribonucleoside 5'-triphosphate = RNA(n+1) + diphosphate. Its function is as follows. DNA-dependent RNA polymerase catalyzes the transcription of DNA into RNA using the four ribonucleoside triphosphates as substrates. The sequence is that of DNA-directed RNA polymerase subunit beta from Thalassiosira pseudonana (Marine diatom).